We begin with the raw amino-acid sequence, 405 residues long: Cystathionine gamma-lyase (405 aa).

Residues Arg62, Tyr114, and Arg119 each coordinate substrate. Lys212 is modified (N6-(pyridoxal phosphate)lysine). Position 339 (Glu339) interacts with substrate.

It belongs to the trans-sulfuration enzymes family. As to quaternary structure, homotetramer. Interacts with CALM in a calcium-dependent manner. Pyridoxal 5'-phosphate serves as cofactor. As to expression, highly expressed in liver. Also in muscle and lower expression in most tissues except heart, pituitary gland, spleen, thymus, and vascular tissue, where it is hardly detected.

It localises to the cytoplasm. It carries out the reaction L,L-cystathionine + H2O = 2-oxobutanoate + L-cysteine + NH4(+). The catalysed reaction is L-cysteine + H2O = hydrogen sulfide + pyruvate + NH4(+) + H(+). The enzyme catalyses L-homocysteine + H2O = 2-oxobutanoate + hydrogen sulfide + NH4(+) + H(+). It catalyses the reaction L-homoserine = 2-oxobutanoate + NH4(+). It carries out the reaction L-selenocystathionine + H2O = L-selenocysteine + 2-oxobutanoate + NH4(+). Its pathway is amino-acid biosynthesis; L-cysteine biosynthesis; L-cysteine from L-homocysteine and L-serine: step 2/2. Its activity is regulated as follows. Inhibited by propargylglycine, trifluoroalanine and aminoethoxyvinylglycine. Functionally, catalyzes the last step in the trans-sulfuration pathway from L-methionine to L-cysteine in a pyridoxal-5'-phosphate (PLP)-dependent manner, which consists on cleaving the L,L-cystathionine molecule into L-cysteine, ammonia and 2-oxobutanoate. Part of the L-cysteine derived from the trans-sulfuration pathway is utilized for biosynthesis of the ubiquitous antioxidant glutathione. Besides its role in the conversion of L-cystathionine into L-cysteine, it utilizes L-cysteine and L-homocysteine as substrates (at much lower rates than L,L-cystathionine) to produce the endogenous gaseous signaling molecule hydrogen sulfide (H2S). In vitro, it converts two L-cysteine molecules into lanthionine and H2S, also two L-homocysteine molecules to homolanthionine and H2S, which can be particularly relevant under conditions of severe hyperhomocysteinemia (which is a risk factor for cardiovascular disease, diabetes, and Alzheimer's disease). Lanthionine and homolanthionine are structural homologs of L,L-cystathionine that differ by the absence or presence of an extra methylene group, respectively. Acts as a cysteine-protein sulfhydrase by mediating sulfhydration of target proteins: sulfhydration consists of converting -SH groups into -SSH on specific cysteine residues of target proteins such as GAPDH, PTPN1 and NF-kappa-B subunit RELA, thereby regulating their function. By generating the gasotransmitter H2S, it participates in a number of physiological processes such as vasodilation, bone protection, and inflammation. Plays an essential role in myogenesis by contributing to the biogenesis of H2S in skeletal muscle tissue. Can also accept homoserine as substrate. Catalyzes the elimination of selenocystathionine (which can be derived from the diet) to yield selenocysteine, ammonia and 2-oxobutanoate. In Homo sapiens (Human), this protein is Cystathionine gamma-lyase (CTH).